The sequence spans 269 residues: Triosephosphate isomerase (269 aa).

8 to 10 (NWK) provides a ligand contact to substrate. The active-site Electrophile is histidine 105. The active-site Proton acceptor is the glutamate 183. Substrate is bound by residues glycine 189, serine 227, and 248–249 (GG).

Belongs to the triosephosphate isomerase family. Homodimer.

The protein resides in the cytoplasm. The catalysed reaction is D-glyceraldehyde 3-phosphate = dihydroxyacetone phosphate. It participates in carbohydrate biosynthesis; gluconeogenesis. It functions in the pathway carbohydrate degradation; glycolysis; D-glyceraldehyde 3-phosphate from glycerone phosphate: step 1/1. Involved in the gluconeogenesis. Catalyzes stereospecifically the conversion of dihydroxyacetone phosphate (DHAP) to D-glyceraldehyde-3-phosphate (G3P). The polypeptide is Triosephosphate isomerase (Psychrobacter cryohalolentis (strain ATCC BAA-1226 / DSM 17306 / VKM B-2378 / K5)).